We begin with the raw amino-acid sequence, 479 residues long: Aspartyl/glutamyl-tRNA(Asn/Gln) amidotransferase subunit B (479 aa).

This sequence belongs to the GatB/GatE family. GatB subfamily. In terms of assembly, heterotrimer of A, B and C subunits.

The enzyme catalyses L-glutamyl-tRNA(Gln) + L-glutamine + ATP + H2O = L-glutaminyl-tRNA(Gln) + L-glutamate + ADP + phosphate + H(+). It catalyses the reaction L-aspartyl-tRNA(Asn) + L-glutamine + ATP + H2O = L-asparaginyl-tRNA(Asn) + L-glutamate + ADP + phosphate + 2 H(+). Its function is as follows. Allows the formation of correctly charged Asn-tRNA(Asn) or Gln-tRNA(Gln) through the transamidation of misacylated Asp-tRNA(Asn) or Glu-tRNA(Gln) in organisms which lack either or both of asparaginyl-tRNA or glutaminyl-tRNA synthetases. The reaction takes place in the presence of glutamine and ATP through an activated phospho-Asp-tRNA(Asn) or phospho-Glu-tRNA(Gln). In Streptococcus pyogenes serotype M5 (strain Manfredo), this protein is Aspartyl/glutamyl-tRNA(Asn/Gln) amidotransferase subunit B.